Consider the following 212-residue polypeptide: Pyridoxine/pyridoxamine 5'-phosphate oxidase (212 aa).

Substrate contacts are provided by residues 9-12 (RKSY) and lysine 67. Residues 62–67 (RIVLIK), 77–78 (FT), arginine 83, and lysine 84 contribute to the FMN site. Substrate-binding residues include tyrosine 124, arginine 128, and serine 132. FMN is bound by residues 141 to 142 (QS) and tryptophan 185. Residue 191 to 193 (RLH) participates in substrate binding. Arginine 195 lines the FMN pocket.

It belongs to the pyridoxamine 5'-phosphate oxidase family. Homodimer. Requires FMN as cofactor.

It carries out the reaction pyridoxamine 5'-phosphate + O2 + H2O = pyridoxal 5'-phosphate + H2O2 + NH4(+). It catalyses the reaction pyridoxine 5'-phosphate + O2 = pyridoxal 5'-phosphate + H2O2. The protein operates within cofactor metabolism; pyridoxal 5'-phosphate salvage; pyridoxal 5'-phosphate from pyridoxamine 5'-phosphate: step 1/1. It functions in the pathway cofactor metabolism; pyridoxal 5'-phosphate salvage; pyridoxal 5'-phosphate from pyridoxine 5'-phosphate: step 1/1. Its function is as follows. Catalyzes the oxidation of either pyridoxine 5'-phosphate (PNP) or pyridoxamine 5'-phosphate (PMP) into pyridoxal 5'-phosphate (PLP). This chain is Pyridoxine/pyridoxamine 5'-phosphate oxidase, found in Verminephrobacter eiseniae (strain EF01-2).